The chain runs to 511 residues: Coatomer subunit delta (511 aa).

Positions 168-177 (QARRDAERQG) are enriched in basic and acidic residues. A disordered region spans residues 168-188 (QARRDAERQGKKAPGFGGFGS). Serine 223 carries the post-translational modification Phosphoserine. N6-acetyllysine is present on residues lysine 233 and lysine 241. A Phosphoserine modification is found at serine 244. In terms of domain architecture, MHD spans 271–511 (MESVHMKIEE…TFLVDKYEIL (241 aa)). N6-acetyllysine occurs at positions 309 and 351. Position 493 is a phosphoserine (serine 493).

The protein belongs to the adaptor complexes medium subunit family. Delta-COP subfamily. Oligomeric complex that consists of at least the alpha, beta, beta', gamma, delta, epsilon and zeta subunits.

It localises to the cytoplasm. The protein resides in the golgi apparatus membrane. It is found in the cytoplasmic vesicle. The protein localises to the COPI-coated vesicle membrane. Functionally, the coatomer is a cytosolic protein complex that binds to dilysine motifs and reversibly associates with Golgi non-clathrin-coated vesicles, which further mediate biosynthetic protein transport from the ER, via the Golgi up to the trans Golgi network. Coatomer complex is required for budding from Golgi membranes, and is essential for the retrograde Golgi-to-ER transport of dilysine-tagged proteins. In mammals, the coatomer can only be recruited by membranes associated to ADP-ribosylation factors (ARFs), which are small GTP-binding proteins; the complex also influences the Golgi structural integrity, as well as the processing, activity, and endocytic recycling of LDL receptors. This Mus musculus (Mouse) protein is Coatomer subunit delta (Arcn1).